The primary structure comprises 313 residues: Protoheme IX farnesyltransferase (313 aa).

9 helical membrane-spanning segments follow: residues 22-42 (FALL…VGLM), 46-66 (IGVH…GGGA), 98-118 (GEAL…LALA), 121-141 (VFAG…YTMW), 150-170 (IVIG…AATG), 177-197 (WLMF…LALF), 223-243 (ILVY…TSVG), 246-266 (IYLT…VQIW), and 284-304 (FFKL…AEAL).

This sequence belongs to the UbiA prenyltransferase family. Protoheme IX farnesyltransferase subfamily. In terms of assembly, interacts with CtaA.

The protein localises to the cell inner membrane. It catalyses the reaction heme b + (2E,6E)-farnesyl diphosphate + H2O = Fe(II)-heme o + diphosphate. Its pathway is porphyrin-containing compound metabolism; heme O biosynthesis; heme O from protoheme: step 1/1. In terms of biological role, converts heme B (protoheme IX) to heme O by substitution of the vinyl group on carbon 2 of heme B porphyrin ring with a hydroxyethyl farnesyl side group. This chain is Protoheme IX farnesyltransferase, found in Ruegeria sp. (strain TM1040) (Silicibacter sp.).